The primary structure comprises 154 residues: CASP-like protein 5B2 (154 aa).

Topologically, residues M1–T10 are cytoplasmic. The chain crosses the membrane as a helical span at residues V11–M31. The Extracellular segment spans residues V32 to A42. A helical membrane pass occupies residues F43 to L63. Residues D64–P77 are Cytoplasmic-facing. Residues I78–A98 form a helical membrane-spanning segment. Residues C99–A129 lie on the Extracellular side of the membrane. Residues V130–I150 traverse the membrane as a helical segment. Residues L151–V154 lie on the Cytoplasmic side of the membrane.

Belongs to the Casparian strip membrane proteins (CASP) family. Homodimer and heterodimers. As to expression, expressed in the stele of the root.

Its subcellular location is the cell membrane. The sequence is that of CASP-like protein 5B2 from Arabidopsis thaliana (Mouse-ear cress).